The primary structure comprises 128 residues: Large ribosomal subunit protein bL17 (128 aa).

It belongs to the bacterial ribosomal protein bL17 family. Part of the 50S ribosomal subunit. Contacts protein L32.

This is Large ribosomal subunit protein bL17 from Streptococcus gordonii (strain Challis / ATCC 35105 / BCRC 15272 / CH1 / DL1 / V288).